The sequence spans 286 residues: MLRVAVPNKGSLSEAASAMLSEAGYRQRRDTRELVMVDPDNDIEFFFLRPRDIAVYVGQGTLDVGITGRDLLLDAKVEAEELLPLGFAPSTFRFAGPVGDFSGVEQLEGKRLATSYDGLLRDYLAERGVNAKVVRLDGAVESSVRLGVADAIADVVETGNTLKAAGMEIFGDPILKSEAVLIRRSGSGGAANGTAKEIEILIRRLQGVLVARQYVLMDYDIRKDLVEDAAALTPGLESPTVSPLRDSEWVAVRSMVPKKETNRIMDELYDLGARAILVSSIHACRI.

This sequence belongs to the ATP phosphoribosyltransferase family. Long subfamily. The cofactor is Mg(2+).

The protein resides in the cytoplasm. It carries out the reaction 1-(5-phospho-beta-D-ribosyl)-ATP + diphosphate = 5-phospho-alpha-D-ribose 1-diphosphate + ATP. The protein operates within amino-acid biosynthesis; L-histidine biosynthesis; L-histidine from 5-phospho-alpha-D-ribose 1-diphosphate: step 1/9. With respect to regulation, feedback inhibited by histidine. Catalyzes the condensation of ATP and 5-phosphoribose 1-diphosphate to form N'-(5'-phosphoribosyl)-ATP (PR-ATP). Has a crucial role in the pathway because the rate of histidine biosynthesis seems to be controlled primarily by regulation of HisG enzymatic activity. The sequence is that of ATP phosphoribosyltransferase from Paenarthrobacter aurescens (strain TC1).